A 248-amino-acid chain; its full sequence is Triosephosphate isomerase (248 aa).

9–11 contacts substrate; that stretch reads NWK. Residue histidine 94 is the Electrophile of the active site. Glutamate 166 functions as the Proton acceptor in the catalytic mechanism. Residues glycine 172, serine 211, and 232–233 contribute to the substrate site; that span reads GG.

Belongs to the triosephosphate isomerase family. In terms of assembly, homodimer.

It is found in the cytoplasm. The catalysed reaction is D-glyceraldehyde 3-phosphate = dihydroxyacetone phosphate. The protein operates within carbohydrate biosynthesis; gluconeogenesis. It participates in carbohydrate degradation; glycolysis; D-glyceraldehyde 3-phosphate from glycerone phosphate: step 1/1. Its function is as follows. Involved in the gluconeogenesis. Catalyzes stereospecifically the conversion of dihydroxyacetone phosphate (DHAP) to D-glyceraldehyde-3-phosphate (G3P). The polypeptide is Triosephosphate isomerase (Herminiimonas arsenicoxydans).